The following is a 312-amino-acid chain: Fibrinogen-like protein 1 (312 aa).

The N-terminal stretch at 1 to 22 (MAKVFSFILVTTALTMGREISA) is a signal peptide. Residues 23-61 (LEDCAQEQMRLRAQVRLLETRVKQQQVKIKQLLQENEVQ) adopt a coiled-coil conformation. One can recognise a Fibrinogen C-terminal domain in the interval 74–306 (LGSKRQYADC…SVVMKIRPND (233 aa)). Intrachain disulfides connect cysteine 83/cysteine 112 and cysteine 248/cysteine 261.

Homodimer. Interacts (via the Fibrinogen C-terminal domain) with LAG3 (via Ig-like domains 1 and 2). Under normal conditions, liver-specific.

It localises to the secreted. Immune suppressive molecule that inhibits antigen-specific T-cell activation by acting as a major ligand of LAG3. Responsible for LAG3 T-cell inhibitory function. Binds LAG3 independently from MHC class II (MHC-II). Secreted by, and promotes growth of, hepatocytes. The protein is Fibrinogen-like protein 1 of Homo sapiens (Human).